A 458-amino-acid polypeptide reads, in one-letter code: MEFDTIAAISTALGEGAIAIVRVSGDDAVEKVNRIFKGKDLTEVPSHTIHYGHIVDLDTNQVIEEVMVSIMRAPRTFTRENIVEINCHGGLVSVNKVLQLILAQGVRLAEPGEFTKRAFLNGRIDLSQAEAVMDLIRAKTDRAMNVAINQMEGRLSKLIGRLRQDILETLAHVEVNIDYPEYDDVEEMTHNILIEKATHVRAEIAKILETSKQGKILREGIATAIIGRPNVGKSSLLNSLVQEKKAIVTDIAGTTRDVIEEYVNVRGVPLKLIDTAGIRETEDVVERIGVERSKEMMSQADLVLVVVNYSEALTNEDEELFRAVQGKDFIVIVNKTDLPQAIDMERVIELAAGNRVITTSLIEEQGIDELEKAIADLFFEGTIDSADVTYVSNARHIGLLTQAGKTIGDAIEAIENGVPIDMVQIDLTRTWEILGEITGDTVHESLIDQLFSQFCLGK.

Residues Arg-22, Glu-84, and Arg-123 each coordinate (6S)-5-formyl-5,6,7,8-tetrahydrofolate. The TrmE-type G domain occupies 220-379 (GIATAIIGRP…LEKAIADLFF (160 aa)). Asn-230 contacts K(+). GTP contacts are provided by residues 230-235 (NVGKSS), 249-255 (TDIAGTT), and 274-277 (DTAG). Mg(2+) is bound at residue Ser-234. K(+) is bound by residues Thr-249, Ile-251, and Thr-254. Thr-255 provides a ligand contact to Mg(2+). (6S)-5-formyl-5,6,7,8-tetrahydrofolate is bound at residue Lys-458.

This sequence belongs to the TRAFAC class TrmE-Era-EngA-EngB-Septin-like GTPase superfamily. TrmE GTPase family. In terms of assembly, homodimer. Heterotetramer of two MnmE and two MnmG subunits. K(+) is required as a cofactor.

Its subcellular location is the cytoplasm. Its function is as follows. Exhibits a very high intrinsic GTPase hydrolysis rate. Involved in the addition of a carboxymethylaminomethyl (cmnm) group at the wobble position (U34) of certain tRNAs, forming tRNA-cmnm(5)s(2)U34. This is tRNA modification GTPase MnmE from Bacillus cereus (strain ZK / E33L).